The primary structure comprises 308 residues: Membrane protein insertase YidC 1 (308 aa).

Positions 1–22 (MKSIKRFALSAMGVAMLLVLTG) are cleaved as a signal peptide. C23 carries N-palmitoyl cysteine lipidation. C23 carries S-diacylglycerol cysteine lipidation. Helical transmembrane passes span 60–80 (FGVAIIIVTIIVRLIILPLGI), 135–155 (FGGVGCFPILLQMPFFSAIYF), 168–188 (YLGIPLGSPSMILVACAGVLY), 211–226 (MIYMSPLMIVVFSLFS), and 232–252 (LYWVVGGFMMILQQFIVNYIV). The tract at residues 263-308 (ELAKNPPKASAFSKPSGRKDVTPEQPTAITSKKKHKNRNAGKQRSR) is disordered. Residues 293–308 (SKKKHKNRNAGKQRSR) show a composition bias toward basic residues.

The protein belongs to the OXA1/ALB3/YidC family. Type 2 subfamily.

It localises to the cell membrane. Its function is as follows. Required for the insertion and/or proper folding and/or complex formation of integral membrane proteins into the membrane. Involved in integration of membrane proteins that insert both dependently and independently of the Sec translocase complex, as well as at least some lipoproteins. The sequence is that of Membrane protein insertase YidC 1 from Streptococcus pneumoniae serotype 4 (strain ATCC BAA-334 / TIGR4).